The primary structure comprises 354 residues: MKKATCLTDDQRWQSVLARDPNADGEFVFAVRTTGIFCRPSCRARHALRENVSFYANASEALAAGFRPCKRCQPEKANAQQHRLDKITHACRLLEQETPVTLEALADQVAMSPFHLHRLFKATTGMTPKAWQQAWRARRLRESLAKGESVTTSILNAGFPDSSSYYRKADETLGMTAKQFRHGGENLAVRYALADCELGRCLVAESERGICAILLGDDDATLISELQQMFPAADNAPADLMFQQHVREVIASLNQRDTPLTLPLDIRGTAFQQQVWQALRTIPCGETVSYQQLANAIGKPKAVRAVASACAANKLAIIIPCHRVVRGDGTLSGYRWGVSRKAQLLRREAENEER.

The segment at 1-171 (MKKATCLTDD…SSSYYRKADE (171 aa)) is methylphosphotriester-DNA--protein-cysteine methyltransferase. Thr-34 is a DNA binding site. The active-site Nucleophile; methyl group acceptor from methylphosphotriester is Cys-38. Zn(2+) contacts are provided by Cys-38 and Cys-42. Arg-43, Arg-45, and Arg-67 together coordinate DNA. 2 residues coordinate Zn(2+): Cys-69 and Cys-72. The region spanning 85–183 (DKITHACRLL…GMTAKQFRHG (99 aa)) is the HTH araC/xylS-type domain. Residues 102–121 (LEALADQVAMSPFHLHRLFK) constitute a DNA-binding region (H-T-H motif). The segment at 181-354 (RHGGENLAVR…LRREAENEER (174 aa)) is methylated-DNA--protein-cysteine methyltransferase. Catalysis depends on Cys-321, which acts as the Nucleophile; methyl group acceptor from either O6-methylguanine or O4-methylthymine.

The protein in the C-terminal section; belongs to the MGMT family. Zn(2+) serves as cofactor.

It carries out the reaction (2'-deoxyribonucleoside 5'-methylphosphotriester)-DNA + L-cysteinyl-[protein] = 2'-deoxyribonucleotide-DNA + S-methyl-L-cysteinyl-[protein] + H(+). The enzyme catalyses a 6-O-methyl-2'-deoxyguanosine in DNA + L-cysteinyl-[protein] = S-methyl-L-cysteinyl-[protein] + a 2'-deoxyguanosine in DNA. The catalysed reaction is a 4-O-methyl-thymidine in DNA + L-cysteinyl-[protein] = a thymidine in DNA + S-methyl-L-cysteinyl-[protein]. Functionally, involved in the adaptive response to alkylation damage in DNA caused by alkylating agents. Repairs O6-methylguanine (O6-MeG) and O4-methylthymine (O4-MeT) in DNA. Repairs the methylated nucleobase in DNA by stoichiometrically transferring the methyl group to a cysteine residue in the enzyme (Cys-321). Also specifically repairs the Sp diastereomer of DNA methylphosphotriester lesions by the same mechanism, although the methyl transfer occurs onto a different cysteine residue (Cys-38). Cannot demethylate the other diastereomer, Rp-methylphosphotriester. This is a suicide reaction: the enzyme is irreversibly inactivated. Its function is as follows. The methylation of Ada by methylphosphotriesters in DNA leads to its activation as a transcriptional regulator that activates the transcription of its own gene, ada, and other alkylation resistance genes, alkA, alkB and aidB. The protein is Bifunctional transcriptional activator/DNA repair enzyme Ada (ada) of Escherichia coli (strain K12).